We begin with the raw amino-acid sequence, 366 residues long: Protein-glutamate methylesterase/protein-glutamine glutaminase of group 2 operon (366 aa).

In terms of domain architecture, Response regulatory spans 19-136; sequence RVLIVDDSAM…GQGLPAIMRD (118 aa). Position 70 is a 4-aspartylphosphate (aspartate 70). The 195-residue stretch at 162–356 folds into the CheB-type methylesterase domain; the sequence is PGASEDWIHA…ARMMLAAAAD (195 aa). Catalysis depends on residues serine 175, histidine 201, and aspartate 298.

Belongs to the CheB family. In terms of processing, phosphorylated by CheA. Phosphorylation of the N-terminal regulatory domain activates the methylesterase activity.

It localises to the cytoplasm. It carries out the reaction [protein]-L-glutamate 5-O-methyl ester + H2O = L-glutamyl-[protein] + methanol + H(+). The enzyme catalyses L-glutaminyl-[protein] + H2O = L-glutamyl-[protein] + NH4(+). Involved in chemotaxis. Part of a chemotaxis signal transduction system that modulates chemotaxis in response to various stimuli. Catalyzes the demethylation of specific methylglutamate residues introduced into the chemoreceptors (methyl-accepting chemotaxis proteins or MCP) by CheR. Also mediates the irreversible deamidation of specific glutamine residues to glutamic acid. The sequence is that of Protein-glutamate methylesterase/protein-glutamine glutaminase of group 2 operon from Cereibacter sphaeroides (Rhodobacter sphaeroides).